The following is a 242-amino-acid chain: RNA transcription, translation and transport factor protein (242 aa).

It belongs to the RTRAF family. In terms of assembly, homodimer. Component of a tRNA-splicing ligase complex.

Its subcellular location is the nucleus. It is found in the cytoplasm. The protein resides in the cytosol. The protein localises to the perinuclear region. It localises to the cytoskeleton. Its subcellular location is the microtubule organizing center. It is found in the centrosome. In terms of biological role, RNA-binding protein involved in modulation of mRNA transcription by Polymerase II. Component of the tRNA-splicing ligase complex. The sequence is that of RNA transcription, translation and transport factor protein from Danio rerio (Zebrafish).